Reading from the N-terminus, the 1523-residue chain is Dicer-like protein 1 (1523 aa).

A compositionally biased stretch (polar residues) spans 24–38 (LNLSGERTISTTEPT). The tract at residues 24–58 (LNLSGERTISTTEPTEGNDSSSEESGDNEQISTQR) is disordered. Residues 123-304 (LFERAKSQNT…ESATKLEVLL (182 aa)) enclose the Helicase ATP-binding domain. 136–143 (LDTGSGKT) provides a ligand contact to ATP. Residues 249 to 252 (DEAH) carry the DEAH box motif. Residues 444 to 617 (LLRQKLIKYF…GIDSEIDSIL (174 aa)) enclose the Helicase C-terminal domain. One can recognise a Dicer dsRNA-binding fold domain in the interval 640–730 (ALAILARYAS…NSVYHRRLPA (91 aa)). The PAZ domain occupies 879–1007 (ELLHLVHENE…VCIEPLRISA (129 aa)). RNase III domains follow at residues 1031–1190 (IALE…LSGG) and 1241–1392 (GRKV…VDSD). Positions 1281, 1378, and 1381 each coordinate Mg(2+). The 69-residue stretch at 1426 to 1494 (TFLQNRLTNE…SEKALSVLEN (69 aa)) folds into the DRBM domain. 4 residues coordinate Zn(2+): Cys1438, His1465, Cys1506, and Cys1508.

The protein belongs to the helicase family. Dicer subfamily. The cofactor is Mg(2+). Mn(2+) is required as a cofactor.

Its function is as follows. Dicer-like endonuclease involved in cleaving double-stranded RNA in the RNA interference (RNAi) pathway. Produces 21 to 25 bp dsRNAs (siRNAs) which target the selective destruction of homologous RNAs leading to sequence-specific suppression of gene expression, called post-transcriptional gene silencing (PTGS). Part of a broad host defense response against viral infection and transposons. The chain is Dicer-like protein 1 (dcl1) from Aspergillus oryzae (strain ATCC 42149 / RIB 40) (Yellow koji mold).